A 173-amino-acid chain; its full sequence is dCTP deaminase, dUMP-forming (173 aa).

DCTP-binding positions include 93-98, aspartate 111, 119-121, glutamine 138, and tyrosine 151; these read RSSTGR and TLE. The Proton donor/acceptor role is filled by glutamate 121.

This sequence belongs to the dCTP deaminase family. Homotrimer.

It catalyses the reaction dCTP + 2 H2O = dUMP + NH4(+) + diphosphate. The protein operates within pyrimidine metabolism; dUMP biosynthesis; dUMP from dCTP: step 1/1. In terms of biological role, bifunctional enzyme that catalyzes both the deamination of dCTP to dUTP and the hydrolysis of dUTP to dUMP without releasing the toxic dUTP intermediate. This chain is dCTP deaminase, dUMP-forming, found in Clostridium beijerinckii (strain ATCC 51743 / NCIMB 8052) (Clostridium acetobutylicum).